A 296-amino-acid chain; its full sequence is Lipoyl synthase (296 aa).

The [4Fe-4S] cluster site is built by Cys-37, Cys-42, Cys-48, Cys-63, Cys-67, Cys-70, and Ser-276. A Radical SAM core domain is found at 49–265 (WSKKHTTVMI…ERVAKTKGFL (217 aa)).

This sequence belongs to the radical SAM superfamily. Lipoyl synthase family. Requires [4Fe-4S] cluster as cofactor.

It localises to the cytoplasm. The enzyme catalyses [[Fe-S] cluster scaffold protein carrying a second [4Fe-4S](2+) cluster] + N(6)-octanoyl-L-lysyl-[protein] + 2 oxidized [2Fe-2S]-[ferredoxin] + 2 S-adenosyl-L-methionine + 4 H(+) = [[Fe-S] cluster scaffold protein] + N(6)-[(R)-dihydrolipoyl]-L-lysyl-[protein] + 4 Fe(3+) + 2 hydrogen sulfide + 2 5'-deoxyadenosine + 2 L-methionine + 2 reduced [2Fe-2S]-[ferredoxin]. It participates in protein modification; protein lipoylation via endogenous pathway; protein N(6)-(lipoyl)lysine from octanoyl-[acyl-carrier-protein]: step 2/2. In terms of biological role, catalyzes the radical-mediated insertion of two sulfur atoms into the C-6 and C-8 positions of the octanoyl moiety bound to the lipoyl domains of lipoate-dependent enzymes, thereby converting the octanoylated domains into lipoylated derivatives. The protein is Lipoyl synthase of Rickettsia conorii (strain ATCC VR-613 / Malish 7).